We begin with the raw amino-acid sequence, 138 residues long: Putative nickel-responsive regulator (138 aa).

4 residues coordinate Ni(2+): His78, His89, His91, and Cys97.

Belongs to the transcriptional regulatory CopG/NikR family. Ni(2+) serves as cofactor.

Its function is as follows. Transcriptional regulator. The sequence is that of Putative nickel-responsive regulator from Thermococcus kodakarensis (strain ATCC BAA-918 / JCM 12380 / KOD1) (Pyrococcus kodakaraensis (strain KOD1)).